A 394-amino-acid polypeptide reads, in one-letter code: Actin-related protein 2 (394 aa).

N-acetylmethionine is present on Met-1. ATP contacts are provided by residues 160-162 (GDG) and 214-218 (RMIKE). Lys-299 bears the N6-acetyllysine mark. 305-310 (GGSTMY) lines the ATP pocket. An N6-acetyllysine modification is found at Lys-322.

Belongs to the actin family. ARP2 subfamily. In terms of assembly, component of the Arp2/3 complex composed of ACTR2/ARP2, ACTR3/ARP3, ARPC1B/p41-ARC, ARPC2/p34-ARC, ARPC3/p21-ARC, ARPC4/p20-ARC and ARPC5/p16-ARC. Interacts with AVIL.

It is found in the cytoplasm. Its subcellular location is the cytoskeleton. The protein resides in the cell projection. It localises to the nucleus. ATP-binding component of the Arp2/3 complex, a multiprotein complex that mediates actin polymerization upon stimulation by nucleation-promoting factor (NPF). The Arp2/3 complex mediates the formation of branched actin networks in the cytoplasm, providing the force for cell motility. Seems to contact the pointed end of the daughter actin filament. In podocytes, required for the formation of lamellipodia downstream of AVIL and PLCE1 regulation. In addition to its role in the cytoplasmic cytoskeleton, the Arp2/3 complex also promotes actin polymerization in the nucleus, thereby regulating gene transcription and repair of damaged DNA. The Arp2/3 complex promotes homologous recombination (HR) repair in response to DNA damage by promoting nuclear actin polymerization, leading to drive motility of double-strand breaks (DSBs). This chain is Actin-related protein 2 (ACTR2), found in Bos taurus (Bovine).